Here is a 401-residue protein sequence, read N- to C-terminus: Nicotinate phosphoribosyltransferase (401 aa).

Residue His-224 is modified to Phosphohistidine; by autocatalysis.

It belongs to the NAPRTase family. Transiently phosphorylated on a His residue during the reaction cycle. Phosphorylation strongly increases the affinity for substrates and increases the rate of nicotinate D-ribonucleotide production. Dephosphorylation regenerates the low-affinity form of the enzyme, leading to product release.

It catalyses the reaction nicotinate + 5-phospho-alpha-D-ribose 1-diphosphate + ATP + H2O = nicotinate beta-D-ribonucleotide + ADP + phosphate + diphosphate. The protein operates within cofactor biosynthesis; NAD(+) biosynthesis; nicotinate D-ribonucleotide from nicotinate: step 1/1. In terms of biological role, catalyzes the synthesis of beta-nicotinate D-ribonucleotide from nicotinate and 5-phospho-D-ribose 1-phosphate at the expense of ATP. This Pseudomonas putida (strain ATCC 700007 / DSM 6899 / JCM 31910 / BCRC 17059 / LMG 24140 / F1) protein is Nicotinate phosphoribosyltransferase.